Here is a 254-residue protein sequence, read N- to C-terminus: MKLKFWREVAIDIISDFETTIMPFFGNPDGGKLVKISPSGDETKLVDKLAEDLILSRITELGVNVVSEEVGVIDNESEYTVIVDPLDGSYNFIAGIPFFALSLAVFKKDKPIYAIIYEPMTERFFEGIPGEGAFLNGKRIKVRKTPDEKPSISFYSRGKGHEIVKHVKRTRTLGAIALELAYLAMGALDGVVDVRKYVRPTDIAAGTIIAKEAGALIKDSAGKDIDISFNATDRLDVIAVNSEELLKTILSLLE.

The Mg(2+) site is built by glutamate 68, aspartate 84, leucine 86, and aspartate 87. Substrate is bound by residues aspartate 87–serine 89, arginine 171, isoleucine 176, and arginine 195. Aspartate 202 serves as a coordination point for Mg(2+).

Belongs to the inositol monophosphatase superfamily. FBPase class 4 family. Homodimer. Mg(2+) is required as a cofactor.

It catalyses the reaction beta-D-fructose 1,6-bisphosphate + H2O = beta-D-fructose 6-phosphate + phosphate. Inhibited by Li(+), ADP, ATP and glucose-6-phosphate. Functionally, catalyzes the conversion of D-fructose 1,6-bisphosphate to D-fructose 6-phosphate. In vitro, also has weak activity with inositol-1-phosphate, glucose-1-phosphate and glycerol-2-phosphate. In Pyrococcus furiosus (strain ATCC 43587 / DSM 3638 / JCM 8422 / Vc1), this protein is Fructose-1,6-bisphosphatase.